We begin with the raw amino-acid sequence, 325 residues long: Germination protease (325 aa).

A propeptide spanning residues 1-7 (MYNVRTD) is cleaved from the precursor.

This sequence belongs to the peptidase A25 family. As to quaternary structure, homotetramer. Post-translationally, autoproteolytically processed. The inactive tetrameric zymogen termed p46 autoprocesses to a smaller form termed p41, which is active only during spore germination.

It carries out the reaction Endopeptidase action with P4 Glu or Asp, P1 preferably Glu &gt; Asp, P1' hydrophobic and P2' Ala.. Initiates the rapid degradation of small, acid-soluble proteins during spore germination. The protein is Germination protease of Clostridium perfringens (strain 13 / Type A).